A 284-amino-acid chain; its full sequence is MINFDEFPPKYDPSLRPPALTTGLIVFTFMLCVIKSVTSYTFESLILYPRAPLDLNLNSISLYSLFHVNFFHWICNIFTLATPLAVFETRNGTIHTGVTLNLLTVIAALQYCIVGLIFYPNTGVIGLSGIAFSLMSYMAYHESKFRPIMHTFHLSNSLEIKLYTLYVPFVVAIVFMILFPSSSLPGHLFGITTGYLLSYGYIDKLYPPSKVITTIENKLSSLINFLELIVTFYKEEESLVTRGSVGYKPLFNQDIEHGAANAASHGSSAFVGETRVLGTRESTV.

The next 6 helical transmembrane spans lie at 17 to 37 (PPAL…IKSV), 66 to 86 (FHVN…PLAV), 98 to 118 (VTLN…GLIF), 124 to 141 (VIGL…MAYH), 160 to 180 (IKLY…ILFP), and 182 to 202 (SSLP…YGYI). The Nucleophile role is filled by S128. H187 is a catalytic residue.

It belongs to the peptidase S54 family.

It localises to the golgi apparatus membrane. The protein localises to the golgi apparatus. The protein resides in the cis-Golgi network membrane. The enzyme catalyses Cleaves type-1 transmembrane domains using a catalytic dyad composed of serine and histidine that are contributed by different transmembrane domains.. Its function is as follows. Probable rhomboid-type serine protease that catalyzes intramembrane proteolysis. This Candida albicans (strain SC5314 / ATCC MYA-2876) (Yeast) protein is Rhomboid-type serine protease 2 (RBD2).